The sequence spans 132 residues: Pro-MCH 1 (132 aa).

An N-terminal signal peptide occupies residues 1–24 (MRHSVLSISFAVALFLECYTPSTA). Cys120 and Cys129 are joined by a disulfide.

Belongs to the melanin-concentrating hormone family. Pituitary gland. Produced in neurons of lateral basal hypothalamus which project both to the brain and to the neural lobe of the pituitary gland from where MCH is released.

Its function is as follows. Plays a role in skin pigmentation by antagonizing the action of melanotropin alpha. Induces melanin concentration within the melanophores. May participate in the control of the hypothalamo-pituitary adrenal gland axis by inhibiting the release of ACTH. This chain is Pro-MCH 1 (mch1), found in Oncorhynchus mykiss (Rainbow trout).